The following is an 843-amino-acid chain: Protein P (843 aa).

The segment at 1-177 (MPLSYQHFRK…FCGSPYSWEQ (177 aa)) is terminal protein domain (TP). Positions 178–346 (ELQHGRLVLQ…HCLFHIVNLI (169 aa)) are spacer. Disordered stretches follow at residues 221–240 (SRLG…QGGS) and 289–315 (VSTS…SRSQ). Low complexity predominate over residues 223–235 (LGPQPTQGQLAGL). The interval 347–690 (DDWGPCAEHG…YLNLYPVARQ (344 aa)) is polymerase/reverse transcriptase domain (RT). The Reverse transcriptase domain maps to 357–600 (EHRIRTPRTP…YSLNFMGYVI (244 aa)). Residues Asp-429, Asp-551, and Asp-552 each coordinate Mg(2+).

The protein belongs to the hepadnaviridae P protein family.

The enzyme catalyses DNA(n) + a 2'-deoxyribonucleoside 5'-triphosphate = DNA(n+1) + diphosphate. It carries out the reaction Endonucleolytic cleavage to 5'-phosphomonoester.. Activated by host HSP70 and HSP40 in vitro to be able to bind the epsilon loop of the pgRNA. Because deletion of the RNase H region renders the protein partly chaperone-independent, the chaperones may be needed indirectly to relieve occlusion of the RNA-binding site by this domain. Inhibited by several reverse-transcriptase inhibitors: Lamivudine, Adefovir and Entecavir. In terms of biological role, multifunctional enzyme that converts the viral RNA genome into dsDNA in viral cytoplasmic capsids. This enzyme displays a DNA polymerase activity that can copy either DNA or RNA templates, and a ribonuclease H (RNase H) activity that cleaves the RNA strand of RNA-DNA heteroduplexes in a partially processive 3'- to 5'-endonucleasic mode. Neo-synthesized pregenomic RNA (pgRNA) are encapsidated together with the P protein, and reverse-transcribed inside the nucleocapsid. Initiation of reverse-transcription occurs first by binding the epsilon loop on the pgRNA genome, and is initiated by protein priming, thereby the 5'-end of (-)DNA is covalently linked to P protein. Partial (+)DNA is synthesized from the (-)DNA template and generates the relaxed circular DNA (RC-DNA) genome. After budding and infection, the RC-DNA migrates in the nucleus, and is converted into a plasmid-like covalently closed circular DNA (cccDNA). The activity of P protein does not seem to be necessary for cccDNA generation, and is presumably released from (+)DNA by host nuclear DNA repair machinery. This Homo sapiens (Human) protein is Protein P.